A 152-amino-acid chain; its full sequence is SKP1-like protein 8 (152 aa).

Positions 94-152 are interaction with the F-box domain of F-box proteins; the sequence is TNAANFLNNKSLLHLAGQTVADMIKGNTPKQMREFFNIENDLTPEEEAAIRRENKWAFE.

This sequence belongs to the SKP1 family. Part of a SCF (SKP1-cullin-F-box) protein ligase complex. In terms of tissue distribution, restricted to siliques.

It is found in the nucleus. It participates in protein modification; protein ubiquitination. Functionally, involved in ubiquitination and subsequent proteasomal degradation of target proteins. Together with CUL1, RBX1 and a F-box protein, it forms a SCF E3 ubiquitin ligase complex. The functional specificity of this complex depends on the type of F-box protein. In the SCF complex, it serves as an adapter that links the F-box protein to CUL1. This Arabidopsis thaliana (Mouse-ear cress) protein is SKP1-like protein 8 (ASK8).